A 105-amino-acid chain; its full sequence is Urease subunit beta (105 aa).

This sequence belongs to the urease beta subunit family. In terms of assembly, heterotrimer of UreA (gamma), UreB (beta) and UreC (alpha) subunits. Three heterotrimers associate to form the active enzyme.

The protein resides in the cytoplasm. It carries out the reaction urea + 2 H2O + H(+) = hydrogencarbonate + 2 NH4(+). The protein operates within nitrogen metabolism; urea degradation; CO(2) and NH(3) from urea (urease route): step 1/1. This chain is Urease subunit beta, found in Pseudomonas putida (strain GB-1).